Reading from the N-terminus, the 1151-residue chain is Nardilysin (1151 aa).

The signal sequence occupies residues 1-20 (MLRRVTVAAVCATRRKLCEA). Disordered stretches follow at residues 53 to 108 (RNKA…KSPS) and 133 to 207 (MEGK…KKTT). A phosphoserine mark is found at serine 86, serine 94, and serine 96. Positions 141–198 (TDDEEEEEVEEEEEDDDEDSGAEIEDDDEEGFDDEDEFDDEHDDDLDTEDNELEELEE) are enriched in acidic residues. Histidine 233 provides a ligand contact to Zn(2+). The active-site Proton acceptor is glutamate 236. The Zn(2+) site is built by histidine 237 and glutamate 314.

The protein belongs to the peptidase M16 family. Interacts with BACE1 and NRG1. Requires Zn(2+) as cofactor. In terms of tissue distribution, primarily in adult heart, skeletal muscle, and testis and at much lower levels in other tissues.

It localises to the mitochondrion. The protein resides in the cell projection. The protein localises to the dendrite. The enzyme catalyses Hydrolysis of polypeptides, preferably at -Xaa-|-Arg-Lys-, and less commonly at -Arg-|-Arg-Xaa-, in which Xaa is not Arg or Lys.. Functionally, cleaves peptide substrates on the N-terminus of arginine residues in dibasic pairs. Is a critical activator of BACE1- and ADAM17-mediated pro-neuregulin ectodomain shedding, involved in the positive regulation of axonal maturation and myelination. Required for proper functioning of 2-oxoglutarate dehydrogenase (OGDH). The protein is Nardilysin of Homo sapiens (Human).